The primary structure comprises 450 residues: Mitochondrial distribution and morphology protein 10 (450 aa).

The protein belongs to the MDM10 family. Component of the ER-mitochondria encounter structure (ERMES) or MDM complex, composed of MMM1, MDM10, MDM12 and MDM34. Associates with the mitochondrial outer membrane sorting assembly machinery SAM(core) complex.

It localises to the mitochondrion outer membrane. Its function is as follows. Component of the ERMES/MDM complex, which serves as a molecular tether to connect the endoplasmic reticulum and mitochondria. Components of this complex are involved in the control of mitochondrial shape and protein biogenesis and may function in phospholipid exchange. MDM10 is involved in the late assembly steps of the general translocase of the mitochondrial outer membrane (TOM complex). Functions in the TOM40-specific route of the assembly of outer membrane beta-barrel proteins, including the association of TOM40 with the receptor TOM22 and small TOM proteins. Can associate with the SAM(core) complex as well as the MDM12-MMM1 complex, both involved in late steps of the major beta-barrel assembly pathway, that is responsible for biogenesis of all outer membrane beta-barrel proteins. May act as a switch that shuttles between both complexes and channels precursor proteins into the TOM40-specific pathway. Plays a role in mitochondrial morphology and in the inheritance of mitochondria. This chain is Mitochondrial distribution and morphology protein 10, found in Paracoccidioides lutzii (strain ATCC MYA-826 / Pb01) (Paracoccidioides brasiliensis).